A 774-amino-acid chain; its full sequence is Lon protease 2 (774 aa).

Positions 5 to 198 (YPLMPLRDIV…LLLEILFREL (194 aa)) constitute a Lon N-terminal domain. 350 to 357 (GPPGVGKT) contributes to the ATP binding site. The Lon proteolytic domain maps to 588–769 (RDEVGLATGL…DQVLEQALLS (182 aa)). Catalysis depends on residues Ser-675 and Lys-718.

This sequence belongs to the peptidase S16 family. Homohexamer. Organized in a ring with a central cavity.

Its subcellular location is the cytoplasm. It catalyses the reaction Hydrolysis of proteins in presence of ATP.. ATP-dependent serine protease that mediates the selective degradation of mutant and abnormal proteins as well as certain short-lived regulatory proteins. Required for cellular homeostasis and for survival from DNA damage and developmental changes induced by stress. Degrades polypeptides processively to yield small peptide fragments that are 5 to 10 amino acids long. Binds to DNA in a double-stranded, site-specific manner. This is Lon protease 2 from Desulfotalea psychrophila (strain LSv54 / DSM 12343).